The chain runs to 267 residues: Alpha carbonic anhydrase 4 (267 aa).

An N-terminal signal peptide occupies residues 1-26 (MDTNAKTIFFMAMCFIYLSFPNISHA). Asparagine 22 is a glycosylation site (N-linked (GlcNAc...) asparagine). An Alpha-carbonic anhydrase domain is found at 34–264 (TPFTYEQKTE…SKGRSVWFYD (231 aa)). Cysteine 59 and cysteine 214 are disulfide-bonded. Histidine 99 serves as the catalytic Proton acceptor. 2 residues coordinate Zn(2+): histidine 125 and histidine 127. N-linked (GlcNAc...) asparagine glycosylation occurs at asparagine 135. Histidine 144 contributes to the Zn(2+) binding site. Residue 210 to 211 (TV) participates in substrate binding.

This sequence belongs to the alpha-class carbonic anhydrase family. Requires Zn(2+) as cofactor. In terms of processing, N-glycosylated.

It is found in the plastid. The protein resides in the chloroplast stroma. It carries out the reaction hydrogencarbonate + H(+) = CO2 + H2O. In terms of biological role, reversible hydration of carbon dioxide. The protein is Alpha carbonic anhydrase 4 (ACA4) of Arabidopsis thaliana (Mouse-ear cress).